Reading from the N-terminus, the 112-residue chain is Diuretic hormone class 2 (112 aa).

The signal sequence occupies residues 1–24 (MVRATCLLASCVLFALLLIVPASA). The propeptide occupies 25 to 71 (YPRYPSNYFREEGQYEPEEIMDMLNRLGNLIQMERKMENYKEDITSE). A Proline amide modification is found at P104. Residues 108–112 (RRDAH) constitute a propeptide that is removed on maturation.

Expressed in corpora cardiaca (CC), corpora allata (CA), antennal lobe (AL) and gnathal ganglion (GNG) (at protein level). Expression in CC, CA and AL detected in most animals, expression in GNG in few animals (at protein level).

Its subcellular location is the secreted. Functionally, regulation of fluid secretion. Stimulates Malpighian tubule fluid secretion. This is Diuretic hormone class 2 from Agrotis ipsilon (Black cutworm moth).